Consider the following 504-residue polypeptide: Serine O-succinyltransferase (504 aa).

A mitochondrion-targeting transit peptide spans 1–26 (MLRASSKRLQLSWQVFRRFQSSNPQL). The tract at residues 49-70 (QACPNSVDPSASITSPSLSSGP) is disordered. Positions 57-70 (PSASITSPSLSSGP) are enriched in low complexity. Residues 117–395 (NAILLHTGLS…SAEEIIKLNE (279 aa)) form the AB hydrolase-1 domain. The segment at 124-127 (GLSA) is important for substrate specificity. Residue Ser-221 is the Nucleophile of the active site. Arg-290 serves as a coordination point for substrate. Catalysis depends on residues Asp-443 and His-480. Asp-481 contributes to the substrate binding site.

This sequence belongs to the AB hydrolase superfamily. MetX family.

The protein localises to the mitochondrion. The catalysed reaction is succinyl-CoA + L-serine = O-succinyl-L-serine + CoA. It functions in the pathway amino-acid biosynthesis; L-cysteine biosynthesis; L-cysteine from L-serine: step 1/2. Its function is as follows. Transfers a succinyl group from succinyl-CoA to L-serine, forming succinyl-L-serine. Also has weak serine acetyl transferase activity and homoserine succinyl transferase activity. The chain is Serine O-succinyltransferase from Schizosaccharomyces pombe (strain 972 / ATCC 24843) (Fission yeast).